We begin with the raw amino-acid sequence, 226 residues long: ATP synthase F(0) complex subunit a (226 aa).

A run of 6 helical transmembrane segments spans residues 12–32 (PTIL…LLIP), 68–88 (WSLM…LGLL), 97–117 (QLSM…ATGF), 138–158 (IPML…ALAV), 164–184 (ITAG…LSTI), and 200–222 (TTLE…SLYL).

This sequence belongs to the ATPase A chain family. As to quaternary structure, component of the ATP synthase complex composed at least of ATP5F1A/subunit alpha, ATP5F1B/subunit beta, ATP5MC1/subunit c (homooctomer), MT-ATP6/subunit a, MT-ATP8/subunit 8, ATP5ME/subunit e, ATP5MF/subunit f, ATP5MG/subunit g, ATP5MK/subunit k, ATP5MJ/subunit j, ATP5F1C/subunit gamma, ATP5F1D/subunit delta, ATP5F1E/subunit epsilon, ATP5PF/subunit F6, ATP5PB/subunit b, ATP5PD/subunit d, ATP5PO/subunit OSCP. ATP synthase complex consists of a soluble F(1) head domain (subunits alpha(3) and beta(3)) - the catalytic core - and a membrane F(0) domain - the membrane proton channel (subunits c, a, 8, e, f, g, k and j). These two domains are linked by a central stalk (subunits gamma, delta, and epsilon) rotating inside the F1 region and a stationary peripheral stalk (subunits F6, b, d, and OSCP). Interacts with DNAJC30; interaction is direct.

It is found in the mitochondrion inner membrane. The enzyme catalyses H(+)(in) = H(+)(out). Subunit a, of the mitochondrial membrane ATP synthase complex (F(1)F(0) ATP synthase or Complex V) that produces ATP from ADP in the presence of a proton gradient across the membrane which is generated by electron transport complexes of the respiratory chain. ATP synthase complex consist of a soluble F(1) head domain - the catalytic core - and a membrane F(1) domain - the membrane proton channel. These two domains are linked by a central stalk rotating inside the F(1) region and a stationary peripheral stalk. During catalysis, ATP synthesis in the catalytic domain of F(1) is coupled via a rotary mechanism of the central stalk subunits to proton translocation. With the subunit c (ATP5MC1), forms the proton-conducting channel in the F(0) domain, that contains two crucial half-channels (inlet and outlet) that facilitate proton movement from the mitochondrial intermembrane space (IMS) into the matrix. Protons are taken up via the inlet half-channel and released through the outlet half-channel, following a Grotthuss mechanism. The chain is ATP synthase F(0) complex subunit a from Hylobates lar (Lar gibbon).